The chain runs to 146 residues: Large ribosomal subunit protein uL15 (146 aa).

The segment covering M1–R13 has biased composition (basic and acidic residues). Positions M1–G52 are disordered. 2 stretches are compositionally biased toward gly residues: residues R21–A31 and S42–G52.

The protein belongs to the universal ribosomal protein uL15 family. As to quaternary structure, part of the 50S ribosomal subunit.

In terms of biological role, binds to the 23S rRNA. The polypeptide is Large ribosomal subunit protein uL15 (Bacillus anthracis (strain A0248)).